Consider the following 493-residue polypeptide: Acetylcholine receptor subunit epsilon (493 aa).

The signal sequence occupies residues 1–20; that stretch reads MARAPLGVLLLLGLLGRGVG. The Extracellular portion of the chain corresponds to 21–239; it reads KNEELRLYHH…VIYSLIIRRK (219 aa). N-linked (GlcNAc...) asparagine glycosylation is found at asparagine 86 and asparagine 161. The cysteines at positions 148 and 162 are disulfide-linked. Residues 240–264 form a helical membrane-spanning segment; it reads PLFYVINIIVPCVLISGLVLLAYFL. The Cytoplasmic portion of the chain corresponds to 265 to 272; it reads PAQAGGQK. A helical membrane pass occupies residues 273–291; it reads CTVSINVLLAQTVFLFLIA. The Extracellular segment spans residues 292 to 306; the sequence is QKIPETSLSVPLLGR. A helical transmembrane segment spans residues 307-328; sequence FLIFVMVVATLIVMNCVIVLNV. Residues 329–456 are Cytoplasmic-facing; sequence SQRTPTTHAM…WVRMGNALDN (128 aa). A helical membrane pass occupies residues 457–480; that stretch reads ICFWAALVLFSVGSSLIFLGAYFN. Over 481 to 493 the chain is Extracellular; sequence RVPDLPYAPCIQP.

It belongs to the ligand-gated ion channel (TC 1.A.9) family. Acetylcholine receptor (TC 1.A.9.1) subfamily. Epsilon/CHRNE sub-subfamily. Pentamer of two alpha chains, and one each of the beta, delta, and gamma (in immature muscle) or epsilon (in mature muscle) chains. The muscle heteropentamer composed of alpha-1, beta-1, delta, epsilon subunits interacts with the alpha-conotoxin ImII.

The protein localises to the postsynaptic cell membrane. It localises to the cell membrane. The catalysed reaction is K(+)(in) = K(+)(out). It carries out the reaction Na(+)(in) = Na(+)(out). Functionally, after binding acetylcholine, the AChR responds by an extensive change in conformation that affects all subunits and leads to opening of an ion-conducting channel across the plasma membrane. The sequence is that of Acetylcholine receptor subunit epsilon from Homo sapiens (Human).